A 122-amino-acid polypeptide reads, in one-letter code: Large ribosomal subunit protein bL12 (122 aa).

Belongs to the bacterial ribosomal protein bL12 family. In terms of assembly, homodimer. Part of the 50S ribosomal subunit; present in 4 copies per ribosome. Forms part of the ribosomal stalk which helps the ribosome interact with GTP-bound translation factors. Forms a pentameric L10(L12)2(L12)2 complex, where L10 forms an elongated spine to which 2 L12 dimers bind in a sequential fashion.

Functionally, forms part of the ribosomal stalk which helps the ribosome interact with GTP-bound translation factors. Is thus essential for accurate translation. The protein is Large ribosomal subunit protein bL12 of Geobacillus stearothermophilus (Bacillus stearothermophilus).